Here is a 729-residue protein sequence, read N- to C-terminus: Fatty acid oxidation complex subunit alpha (729 aa).

The segment at 1–189 (MLYKGDTLYL…KIGLVDGVVK (189 aa)) is enoyl-CoA hydratase/isomerase. Asp-296 contacts substrate. The 3-hydroxyacyl-CoA dehydrogenase stretch occupies residues 311–729 (ETPKQAAVLG…ARPVGDLKTA (419 aa)). NAD(+) is bound by residues Met-324, Asp-343, 400–402 (VVE), Lys-407, and Ser-429. Residue His-450 is the For 3-hydroxyacyl-CoA dehydrogenase activity of the active site. Asn-453 contributes to the NAD(+) binding site. Positions 500 and 660 each coordinate substrate. The segment at 708–729 (RHNEPYYPPVEPARPVGDLKTA) is disordered.

It in the N-terminal section; belongs to the enoyl-CoA hydratase/isomerase family. The protein in the C-terminal section; belongs to the 3-hydroxyacyl-CoA dehydrogenase family. In terms of assembly, heterotetramer of two alpha chains (FadB) and two beta chains (FadA).

It catalyses the reaction a (3S)-3-hydroxyacyl-CoA + NAD(+) = a 3-oxoacyl-CoA + NADH + H(+). It carries out the reaction a (3S)-3-hydroxyacyl-CoA = a (2E)-enoyl-CoA + H2O. The enzyme catalyses a 4-saturated-(3S)-3-hydroxyacyl-CoA = a (3E)-enoyl-CoA + H2O. The catalysed reaction is (3S)-3-hydroxybutanoyl-CoA = (3R)-3-hydroxybutanoyl-CoA. It catalyses the reaction a (3Z)-enoyl-CoA = a 4-saturated (2E)-enoyl-CoA. It carries out the reaction a (3E)-enoyl-CoA = a 4-saturated (2E)-enoyl-CoA. The protein operates within lipid metabolism; fatty acid beta-oxidation. Functionally, involved in the aerobic and anaerobic degradation of long-chain fatty acids via beta-oxidation cycle. Catalyzes the formation of 3-oxoacyl-CoA from enoyl-CoA via L-3-hydroxyacyl-CoA. It can also use D-3-hydroxyacyl-CoA and cis-3-enoyl-CoA as substrate. This Escherichia coli O139:H28 (strain E24377A / ETEC) protein is Fatty acid oxidation complex subunit alpha.